Consider the following 542-residue polypeptide: Aminotriazole resistance protein (542 aa).

At 1–108 (MGNQSLVVLT…SFGSEGNSKS (108 aa)) the chain is on the cytoplasmic side. The chain crosses the membrane as a helical span at residues 109 to 129 (WLMASFPLVSGSFILISGRLG). The Extracellular portion of the chain corresponds to 130 to 136 (DIYGLKK). A helical membrane pass occupies residues 137-157 (MLLVGYVLVIIWSLICGITKY). Over 158–172 (SGSDTFFIISRAFQG) the chain is Cytoplasmic. A helical membrane pass occupies residues 173-193 (LGIAFVLPNVLGIIGNIYVGG). Residues 194–198 (TFRKN) lie on the Extracellular side of the membrane. Residues 199–219 (IVISFVGAMAPIGATLGCLFA) traverse the membrane as a helical segment. Residues 220–231 (GLIGTEDPKQWP) lie on the Cytoplasmic side of the membrane. A helical membrane pass occupies residues 232 to 252 (WAFYAYSIAAFINFVLSIYAI). The Extracellular portion of the chain corresponds to 253-262 (PSTIPTNIHH). The helical transmembrane segment at 263-283 (FSMDWIGSVLGVIGLILLNFV) threads the bilayer. The Cytoplasmic portion of the chain corresponds to 284-295 (WNQAPISGWNQA). Residues 296 to 316 (YIIVILIISVIFLVVFIIYEI) traverse the membrane as a helical segment. Topologically, residues 317–333 (RFAKTPLLPRAVIKDRH) are extracellular. A helical transmembrane segment spans residues 334 to 354 (MIQIMLALFFGWGSFGIFTFY). Residues 355–371 (YFQFQLNIRQYTALWAG) lie on the Cytoplasmic side of the membrane. Residues 372-392 (GTYFMFLIWGIIAALLVGFTI) form a helical membrane-spanning segment. At 393–399 (KNVSPSV) the chain is on the extracellular side. A helical membrane pass occupies residues 400 to 420 (FLFFSMVAFNVGSIMASVTPV). The Cytoplasmic portion of the chain corresponds to 421–429 (HETYFRTQL). Residues 430–450 (GTMIILSFGMDLSFPASSIIF) form a helical membrane-spanning segment. The Extracellular segment spans residues 451–505 (SDNLPMEYQGMAGSLVNTVVNYSMSLCLGMGATVETQVNSDGKHLLKGYRGAQYL). Residue asparagine 471 is glycosylated (N-linked (GlcNAc...) asparagine). The helical transmembrane segment at 506-526 (GIGLASLACMISGLYMVESFI) threads the bilayer. The Cytoplasmic segment spans residues 527–542 (KGRRARAAAEYDCTVA).

Belongs to the major facilitator superfamily.

Its subcellular location is the membrane. Functionally, putative component of the machinery responsible for pumping aminotriazole (and possibly other toxic compounds) out of the cell. Probable ATP-dependent export permease. Appears to confer resistance only to aminotriazole. The polypeptide is Aminotriazole resistance protein (ATR1) (Saccharomyces cerevisiae (strain ATCC 204508 / S288c) (Baker's yeast)).